Consider the following 203-residue polypeptide: Urease accessory protein UreG (203 aa).

11-18 (GPVGSGKT) is a binding site for GTP.

The protein belongs to the SIMIBI class G3E GTPase family. UreG subfamily. Homodimer. UreD, UreF and UreG form a complex that acts as a GTP-hydrolysis-dependent molecular chaperone, activating the urease apoprotein by helping to assemble the nickel containing metallocenter of UreC. The UreE protein probably delivers the nickel.

Its subcellular location is the cytoplasm. Functionally, facilitates the functional incorporation of the urease nickel metallocenter. This process requires GTP hydrolysis, probably effectuated by UreG. The protein is Urease accessory protein UreG of Prochlorococcus marinus (strain MIT 9215).